The sequence spans 205 residues: High frequency lysogenization protein HflD homolog (205 aa).

It belongs to the HflD family.

The protein localises to the cytoplasm. It is found in the cell inner membrane. The protein is High frequency lysogenization protein HflD homolog of Shewanella pealeana (strain ATCC 700345 / ANG-SQ1).